A 374-amino-acid polypeptide reads, in one-letter code: Eukaryotic translation initiation factor 3 subunit M (374 aa).

A PCI domain is found at Thr180–His339.

The protein belongs to the eIF-3 subunit M family. As to quaternary structure, component of the eukaryotic translation initiation factor 3 (eIF-3) complex, which is composed of 13 subunits: EIF3A, EIF3B, EIF3C, EIF3D, EIF3E, EIF3F, EIF3G, EIF3H, EIF3I, EIF3J, EIF3K, EIF3L and EIF3M.

The protein localises to the cytoplasm. Component of the eukaryotic translation initiation factor 3 (eIF-3) complex, which is involved in protein synthesis of a specialized repertoire of mRNAs and, together with other initiation factors, stimulates binding of mRNA and methionyl-tRNAi to the 40S ribosome. The eIF-3 complex specifically targets and initiates translation of a subset of mRNAs involved in cell proliferation. The chain is Eukaryotic translation initiation factor 3 subunit M from Gallus gallus (Chicken).